The sequence spans 118 residues: Large ribosomal subunit protein bL19 (118 aa).

This sequence belongs to the bacterial ribosomal protein bL19 family.

Functionally, this protein is located at the 30S-50S ribosomal subunit interface and may play a role in the structure and function of the aminoacyl-tRNA binding site. This is Large ribosomal subunit protein bL19 from Ligilactobacillus salivarius (strain UCC118) (Lactobacillus salivarius).